A 510-amino-acid chain; its full sequence is Ectonucleoside triphosphate diphosphohydrolase 1 (510 aa).

Residues 1 to 16 (MEDRRESELKTFCSKN) lie on the Cytoplasmic side of the membrane. A helical transmembrane segment spans residues 17–37 (ILVILGFSSIIAVIALLALGL). Over 38–477 (TQNKPLPENV…SSTRLSHSTY (440 aa)) the chain is Extracellular. The N-linked (GlcNAc...) asparagine glycan is linked to N73. A disulfide bond links C84 and C108. E174 acts as the Proton acceptor in catalysis. 4 N-linked (GlcNAc...) asparagine glycosylation sites follow: N245, N274, N291, and N333. Disulfide bonds link C255/C300 and C281/C324. C337 and C342 form a disulfide bridge. Residue N370 is glycosylated (N-linked (GlcNAc...) asparagine). A disulfide bridge connects residues C390 and C413. N-linked (GlcNAc...) asparagine glycosylation is present at N457. A helical membrane pass occupies residues 478–498 (VFLMVLFSLILVIVVIIGLFV). Residues 499-510 (CHRPSYFWKDMV) are Cytoplasmic-facing.

It belongs to the GDA1/CD39 NTPase family. As to quaternary structure, homodimer; disulfide-linked. The cofactor is Ca(2+). Requires Mg(2+) as cofactor. N-glycosylated. Post-translationally, cleaved into two polypeptides that seem to stay together by non-covalent interactions. In terms of processing, the N-terminus is blocked. Palmitoylated on Cys-13; which is required for caveola targeting. Highest expression found in vascular endothelium, smooth muscle, spleen and lung (at protein level). High expression also found in stomach, duodenum, kidney, lymph node and aorta (at protein level).

Its subcellular location is the membrane. It localises to the caveola. It catalyses the reaction a ribonucleoside 5'-triphosphate + 2 H2O = a ribonucleoside 5'-phosphate + 2 phosphate + 2 H(+). The catalysed reaction is a ribonucleoside 5'-triphosphate + H2O = a ribonucleoside 5'-diphosphate + phosphate + H(+). The enzyme catalyses a ribonucleoside 5'-diphosphate + H2O = a ribonucleoside 5'-phosphate + phosphate + H(+). It carries out the reaction ATP + 2 H2O = AMP + 2 phosphate + 2 H(+). It catalyses the reaction ATP + H2O = ADP + phosphate + H(+). The catalysed reaction is ADP + H2O = AMP + phosphate + H(+). The enzyme catalyses CTP + 2 H2O = CMP + 2 phosphate + 2 H(+). It carries out the reaction CTP + H2O = CDP + phosphate + H(+). It catalyses the reaction CDP + H2O = CMP + phosphate + H(+). The catalysed reaction is GTP + 2 H2O = GMP + 2 phosphate + 2 H(+). The enzyme catalyses GTP + H2O = GDP + phosphate + H(+). It carries out the reaction GDP + H2O = GMP + phosphate + H(+). It catalyses the reaction ITP + 2 H2O = IMP + 2 phosphate + 2 H(+). The catalysed reaction is ITP + H2O = IDP + phosphate + H(+). The enzyme catalyses IDP + H2O = IMP + phosphate + H(+). It carries out the reaction UTP + 2 H2O = UMP + 2 phosphate + 2 H(+). It catalyses the reaction UTP + H2O = UDP + phosphate + H(+). The catalysed reaction is UDP + H2O = UMP + phosphate + H(+). The ATP diphosphohydrolase activity is decreased by half by sodium azide. In terms of biological role, catalyzes the hydrolysis of both di- and triphosphate nucleotides (NDPs and NTPs) and hydrolyze NTPs to nucleotide monophosphates (NMPs) in two distinct successive phosphate-releasing steps, with NDPs as intermediates and participates in the regulation of extracellular levels of nucleotides. By hydrolyzing proinflammatory ATP and platelet-activating ADP to AMP, it blocks platelet aggregation and supports blood flow. The polypeptide is Ectonucleoside triphosphate diphosphohydrolase 1 (Sus scrofa (Pig)).